A 762-amino-acid polypeptide reads, in one-letter code: Phosphoribosylformylglycinamidine synthase subunit PurL (762 aa).

His-58 is an active-site residue. ATP-binding residues include Tyr-61 and Arg-105. Glu-107 contacts Mg(2+). Residues 108–111 (SHNH) and Arg-130 contribute to the substrate site. The active-site Proton acceptor is His-109. Asp-131 contributes to the Mg(2+) binding site. Gln-255 provides a ligand contact to substrate. Asp-283 lines the Mg(2+) pocket. 327-329 (ESQ) is a substrate binding site. ATP contacts are provided by Asn-513 and Gly-550. Asn-551 lines the Mg(2+) pocket. Residue Ser-553 coordinates substrate.

This sequence belongs to the FGAMS family. In terms of assembly, monomer. Part of the FGAM synthase complex composed of 1 PurL, 1 PurQ and 2 PurS subunits.

It localises to the cytoplasm. The enzyme catalyses N(2)-formyl-N(1)-(5-phospho-beta-D-ribosyl)glycinamide + L-glutamine + ATP + H2O = 2-formamido-N(1)-(5-O-phospho-beta-D-ribosyl)acetamidine + L-glutamate + ADP + phosphate + H(+). It functions in the pathway purine metabolism; IMP biosynthesis via de novo pathway; 5-amino-1-(5-phospho-D-ribosyl)imidazole from N(2)-formyl-N(1)-(5-phospho-D-ribosyl)glycinamide: step 1/2. Functionally, part of the phosphoribosylformylglycinamidine synthase complex involved in the purines biosynthetic pathway. Catalyzes the ATP-dependent conversion of formylglycinamide ribonucleotide (FGAR) and glutamine to yield formylglycinamidine ribonucleotide (FGAM) and glutamate. The FGAM synthase complex is composed of three subunits. PurQ produces an ammonia molecule by converting glutamine to glutamate. PurL transfers the ammonia molecule to FGAR to form FGAM in an ATP-dependent manner. PurS interacts with PurQ and PurL and is thought to assist in the transfer of the ammonia molecule from PurQ to PurL. This chain is Phosphoribosylformylglycinamidine synthase subunit PurL, found in Corynebacterium glutamicum (strain R).